We begin with the raw amino-acid sequence, 629 residues long: tRNA uridine 5-carboxymethylaminomethyl modification enzyme MnmG (629 aa).

FAD contacts are provided by residues 13–18, Val-125, and Ser-180; that span reads GGGHAG. NAD(+) is bound at residue 273-287; that stretch reads GPRYCPSIEDKVMRF. Gln-370 provides a ligand contact to FAD.

This sequence belongs to the MnmG family. In terms of assembly, homodimer. Heterotetramer of two MnmE and two MnmG subunits. FAD serves as cofactor.

The protein resides in the cytoplasm. NAD-binding protein involved in the addition of a carboxymethylaminomethyl (cmnm) group at the wobble position (U34) of certain tRNAs, forming tRNA-cmnm(5)s(2)U34. The chain is tRNA uridine 5-carboxymethylaminomethyl modification enzyme MnmG from Escherichia coli O127:H6 (strain E2348/69 / EPEC).